The chain runs to 345 residues: N-acetyl-gamma-glutamyl-phosphate reductase (345 aa).

Cysteine 149 is a catalytic residue.

It belongs to the NAGSA dehydrogenase family. Type 1 subfamily.

The protein localises to the cytoplasm. It carries out the reaction N-acetyl-L-glutamate 5-semialdehyde + phosphate + NADP(+) = N-acetyl-L-glutamyl 5-phosphate + NADPH + H(+). Its pathway is amino-acid biosynthesis; L-arginine biosynthesis; N(2)-acetyl-L-ornithine from L-glutamate: step 3/4. Its function is as follows. Catalyzes the NADPH-dependent reduction of N-acetyl-5-glutamyl phosphate to yield N-acetyl-L-glutamate 5-semialdehyde. The chain is N-acetyl-gamma-glutamyl-phosphate reductase from Desulforapulum autotrophicum (strain ATCC 43914 / DSM 3382 / VKM B-1955 / HRM2) (Desulfobacterium autotrophicum).